The sequence spans 304 residues: GTP cyclohydrolase FolE2 (304 aa).

Belongs to the GTP cyclohydrolase IV family.

It catalyses the reaction GTP + H2O = 7,8-dihydroneopterin 3'-triphosphate + formate + H(+). The protein operates within cofactor biosynthesis; 7,8-dihydroneopterin triphosphate biosynthesis; 7,8-dihydroneopterin triphosphate from GTP: step 1/1. Its function is as follows. Converts GTP to 7,8-dihydroneopterin triphosphate. The sequence is that of GTP cyclohydrolase FolE2 from Chromohalobacter salexigens (strain ATCC BAA-138 / DSM 3043 / CIP 106854 / NCIMB 13768 / 1H11).